The chain runs to 364 residues: Histidinol-phosphate aminotransferase (364 aa).

N6-(pyridoxal phosphate)lysine is present on Lys226.

Belongs to the class-II pyridoxal-phosphate-dependent aminotransferase family. Histidinol-phosphate aminotransferase subfamily. As to quaternary structure, homodimer. Pyridoxal 5'-phosphate serves as cofactor.

The catalysed reaction is L-histidinol phosphate + 2-oxoglutarate = 3-(imidazol-4-yl)-2-oxopropyl phosphate + L-glutamate. Its pathway is amino-acid biosynthesis; L-histidine biosynthesis; L-histidine from 5-phospho-alpha-D-ribose 1-diphosphate: step 7/9. The protein is Histidinol-phosphate aminotransferase of Campylobacter jejuni subsp. doylei (strain ATCC BAA-1458 / RM4099 / 269.97).